A 466-amino-acid polypeptide reads, in one-letter code: ATP synthase subunit beta (466 aa).

152–159 (GGAGVGKT) serves as a coordination point for ATP.

It belongs to the ATPase alpha/beta chains family. As to quaternary structure, F-type ATPases have 2 components, CF(1) - the catalytic core - and CF(0) - the membrane proton channel. CF(1) has five subunits: alpha(3), beta(3), gamma(1), delta(1), epsilon(1). CF(0) has three main subunits: a(1), b(2) and c(9-12). The alpha and beta chains form an alternating ring which encloses part of the gamma chain. CF(1) is attached to CF(0) by a central stalk formed by the gamma and epsilon chains, while a peripheral stalk is formed by the delta and b chains.

It localises to the cell inner membrane. It catalyses the reaction ATP + H2O + 4 H(+)(in) = ADP + phosphate + 5 H(+)(out). Functionally, produces ATP from ADP in the presence of a proton gradient across the membrane. The catalytic sites are hosted primarily by the beta subunits. This is ATP synthase subunit beta from Helicobacter acinonychis (strain Sheeba).